A 932-amino-acid polypeptide reads, in one-letter code: Probable serine/threonine-protein kinase clkA (932 aa).

Positions 1–10 are enriched in basic residues; that stretch reads MDRFQTKRKT. Disordered stretches follow at residues 1–21, 39–198, and 212–562; these read MDRFQTKRKTYSYNGYSNNDY, YKNN…YGDT, and NDYD…TNTN. Low complexity-rich tracts occupy residues 11–21 and 39–123; these read YSYNGYSNNDY and YKNN…ENNY. Residues 124-143 are compositionally biased toward polar residues; it reads FQSENQSNKDQNSYFNSSYL. Composition is skewed to low complexity over residues 148–196, 218–305, 314–342, and 351–562; these read DNYN…NSYG, NNNN…NGGN, VFNNNNNNNNNNNNNYNNYNSNNNYNNDY, and NIYS…TNTN. One can recognise a Protein kinase domain in the interval 590-920; sequence YKVLCTVGSG…ASDALSHPFL (331 aa). ATP contacts are provided by residues 596-604 and Lys619; that span reads VGSGTFSTV. Asp719 acts as the Proton acceptor in catalysis.

It belongs to the protein kinase superfamily. CMGC Ser/Thr protein kinase family.

The enzyme catalyses L-seryl-[protein] + ATP = O-phospho-L-seryl-[protein] + ADP + H(+). It carries out the reaction L-threonyl-[protein] + ATP = O-phospho-L-threonyl-[protein] + ADP + H(+). The polypeptide is Probable serine/threonine-protein kinase clkA (clkA) (Dictyostelium discoideum (Social amoeba)).